The following is a 505-amino-acid chain: Betaine aldehyde dehydrogenase 1 (505 aa).

163–172 (WNYPLLMATW) is a binding site for betaine aldehyde. 240–245 (GSTETG) contacts NAD(+). Residues Glu262, 294-297 (QVCS), and Cys455 contribute to the betaine aldehyde site. Active-site residues include Glu262 and Cys296. 4-aminobutanal-binding positions include 262–263 (EL) and Cys296. Position 461 (Trp461) interacts with 4-aminobutanal. Residues 503–505 (SKL) carry the Microbody targeting signal motif.

Belongs to the aldehyde dehydrogenase family. As to quaternary structure, homodimer.

The protein resides in the peroxisome. The catalysed reaction is betaine aldehyde + NAD(+) + H2O = glycine betaine + NADH + 2 H(+). The protein operates within amine and polyamine biosynthesis; betaine biosynthesis via choline pathway; betaine from betaine aldehyde: step 1/1. Dehydrogenase that can use N-acetyl-gamma-aminobutyraldehyde (NAGABald), gamma-guanidinobutyraldehyde (GGBald), betaine aldehyde (Bet-ald), gamma-aminobutyraldehyde (GAB-ald), acetaldehyde, 4-aminobutylaldehyde (AB-ald), 3-aminopropionaldehyde (AP-ald), 4-N-trimethylaminobutyraldehyde (TMAB-ald) and 3-N-trimethylaminopropionaldehyde (TMAP-ald) as substrates. Catalyzes the oxidation of GAB-ald more efficiently than Bet-ald. May convert acetaldehyde into acetate, thus facilitating the production of acetyl-CoA in peroxisomes under anaerobic conditions. In Oryza sativa subsp. japonica (Rice), this protein is Betaine aldehyde dehydrogenase 1 (BADH1).